Reading from the N-terminus, the 731-residue chain is Beta-galactosidase (731 aa).

The signal sequence occupies residues 1-23 (MGVGIQTMWSILLLFSCIFSAAS). E182 (proton donor) is an active-site residue. The Nucleophile role is filled by E251. N-linked (GlcNAc...) asparagine glycosylation occurs at N459.

It belongs to the glycosyl hydrolase 35 family.

It localises to the secreted. It is found in the extracellular space. The protein resides in the apoplast. The catalysed reaction is Hydrolysis of terminal non-reducing beta-D-galactose residues in beta-D-galactosides.. Involved in cell wall degradation. Degrades polysaccharides containing beta-(1--&gt;4)-linked galactans, acting as an exo-(1--&gt;4)-beta-D-galactanase. In Malus domestica (Apple), this protein is Beta-galactosidase.